Here is a 305-residue protein sequence, read N- to C-terminus: Acetaldehyde dehydrogenase (305 aa).

13–16 lines the NAD(+) pocket; the sequence is SGNI. Cys-128 serves as the catalytic Acyl-thioester intermediate. NAD(+)-binding positions include 159–167 and Asn-278; that span reads SAGPGTRQN.

Belongs to the acetaldehyde dehydrogenase family.

The enzyme catalyses acetaldehyde + NAD(+) + CoA = acetyl-CoA + NADH + H(+). This chain is Acetaldehyde dehydrogenase, found in Roseiflexus sp. (strain RS-1).